A 372-amino-acid chain; its full sequence is MKLLQTPLYQECKELGGKMVPFANWEMPVSFSGLIEEHNAVRKNVGMFDISHMGVVQLKGKNIKSALQNLVPSDVFRIGPSEACYTVFLKENGGIQDDLIIYDQGVLDTNEESVVLVINAARKESDVEWLSSNLSKKEITISEFMPEGALIAIQGPESISTLEKILEEPLSNLPRFGHRTITSNPNLINSQESIFIARTGYTGEEGFEFLSSPETAKSIWKSLIASGVTPCGLGARDTLRLEASMHLYGNDINLDTTPFEAGLGWLVHLEMPNDFIGRKALEKQAEVGTQKKLVGIQVLDKGIARKGYPVLYNSETVGIVTSGTWSPTLQKPIALAYVPSEIAKVNTQIEVEIRGKKHPAIIVKRPFYRKGF.

Belongs to the GcvT family. The glycine cleavage system is composed of four proteins: P, T, L and H.

The catalysed reaction is N(6)-[(R)-S(8)-aminomethyldihydrolipoyl]-L-lysyl-[protein] + (6S)-5,6,7,8-tetrahydrofolate = N(6)-[(R)-dihydrolipoyl]-L-lysyl-[protein] + (6R)-5,10-methylene-5,6,7,8-tetrahydrofolate + NH4(+). The glycine cleavage system catalyzes the degradation of glycine. The protein is Aminomethyltransferase of Prochlorococcus marinus (strain NATL1A).